Here is a 1005-residue protein sequence, read N- to C-terminus: MTTEVGSVSEVKKDSSQLGTDATKEKPKEVAENQQNQSSDPEEEKGSQPPPAAESQSSLRRQKREKETSESRGISRFIPPWLKKQKSYTLVVAKDGGDKKEPTQAVVEEQVLDKEEPLPEEQRQAKGDAEEMAQKKQEIKVEVKEEKPSVSKEEKPSVSKVEMQPTELVSKEREEKVKETQEDKLEGGAAKRETKEVQTNELKAEKASQKVTKKTKTVQCKVTLLDGTEYSCDLEKHAKGQVLFDKVCEHLNLLEKDYFGLLFQESPEQKNWLDPAKEIKRQLRNLPWLFTFNVKFYPPDPSQLTEDITRYFLCLQLRQDIASGRLPCSFVTHALLGSYTLQAELGDYDPEEHGSIDLSEFQFAPTQTKELEEKVAELHKTHRGLSPAQADSQFLENAKRLSMYGVDLHHAKDSEGVDIKLGVCANGLLIYKDRLRINRFAWPKILKISYKRSNFYIKVRPAELEQFESTIGFKLPNHRAAKRLWKVCVEHHTFYRLVSPEQPPKAKFLTLGSKFRYSGRTQAQTRQASTLIDRPAPHFERTSSKRVSRSLDGAPIGVMDQSLMKDFPGAAGEISAYGPGLVSIAVVQDGDGRREVRSPTKAPHLQLIEGKKNSLRVEGDNIYVRHSNLMLEELDKAQEDILKHQASISELKRNFMESTPEPRPNEWEKRRITPLSLQTQGSSHETLNIVEEKKRAEVGKDERVITEEMNGKEISPGSGPGEIRKVEPVTQKDSTSLSSESSSSSSESEEEDVGEYRPHHRVTEGTIREEQEYEEEVEEEPRPAAKVVEREEAVPEASPVTQAGASVITVETVIQENVGAQKIPGEKSVHEGALKQDMGEEAEEEPQKVNGEVSHVDIDVLPQIICCSEPPVVKTEMVTISDASQRTEISTKEVPIVQTETKTITYESPQIDGGAGGDSGTLLTAQTITSESVSTTTTTHITKTVKGGISETRIEKRIVITGDGDIDHDQALAQAIREAREQHPDMSVTRVVVHKETELAEEGED.

The tract at residues 1-80 is disordered; it reads MTTEVGSVSE…SRGISRFIPP (80 aa). Thr2 carries the N-acetylthreonine modification. Residue Ser7 is modified to Phosphoserine. Residues 22-31 show a composition bias toward basic and acidic residues; it reads ATKEKPKEVA. Residues Ser39, Ser58, and Ser87 each carry the phosphoserine modification. Position 89 is a phosphothreonine (Thr89). A disordered region spans residues 93–196; it reads AKDGGDKKEP…GGAAKRETKE (104 aa). Composition is skewed to basic and acidic residues over residues 111–157 and 169–196; these read VLDK…EKPS and VSKE…ETKE. Residues Lys140 and Lys144 each participate in a glycyl lysine isopeptide (Lys-Gly) (interchain with G-Cter in SUMO2) cross-link. Phosphoserine occurs at positions 170, 208, 386, 402, 499, 550, 562, 575, 598, and 614. The region spanning 218–499 is the FERM domain; that stretch reads VQCKVTLLDG…EHHTFYRLVS (282 aa). The hydrophilic stretch occupies residues 502-610; the sequence is QPPKAKFLTL…KAPHLQLIEG (109 aa). A spectrin--actin-binding region spans residues 611–676; the sequence is KKNSLRVEGD…WEKRRITPLS (66 aa). Tyr623 is modified (phosphotyrosine). Residues Ser627 and Ser647 each carry the phosphoserine modification. The segment at 652 to 800 is disordered; that stretch reads KRNFMESTPE…EEAVPEASPV (149 aa). The span at 675-686 shows a compositional bias: polar residues; that stretch reads LSLQTQGSSHET. Residues 690–711 show a composition bias toward basic and acidic residues; the sequence is VEEKKRAEVGKDERVITEEMNG. 2 positions are modified to phosphoserine: Ser715 and Ser718. Low complexity predominate over residues 734–746; sequence STSLSSESSSSSS. Composition is skewed to basic and acidic residues over residues 754-770 and 780-793; these read GEYR…IREE and EPRP…REEA. Phosphothreonine is present on Thr763. The residue at position 828 (Ser828) is a Phosphoserine. Residues 855–1005 are C-terminal (CTD); sequence HVDIDVLPQI…ETELAEEGED (151 aa).

Interacts with FCGR1A. Interacts with TRPC4. Interacts (via CTD domain) with FKBP2. Interacts with NUMA1; this interaction is negatively regulated by CDK1 during metaphase and promotes anaphase-specific localization of NUMA1 in symmetrically dividing cells. As to expression, widely expressed.

It is found in the cytoplasm. Its subcellular location is the cytoskeleton. The protein localises to the cell cortex. It localises to the cell membrane. In terms of biological role, required for dynein-dynactin complex and NUMA1 recruitment at the mitotic cell cortex during anaphase. In Homo sapiens (Human), this protein is Band 4.1-like protein 2.